We begin with the raw amino-acid sequence, 887 residues long: DNA mismatch repair protein MutS (887 aa).

Residue 602–609 (GPNMSGKS) participates in ATP binding.

This sequence belongs to the DNA mismatch repair MutS family.

Its function is as follows. This protein is involved in the repair of mismatches in DNA. It is possible that it carries out the mismatch recognition step. This protein has a weak ATPase activity. This chain is DNA mismatch repair protein MutS, found in Staphylococcus saprophyticus subsp. saprophyticus (strain ATCC 15305 / DSM 20229 / NCIMB 8711 / NCTC 7292 / S-41).